Reading from the N-terminus, the 104-residue chain is uncharacterized protein (104 aa).

An N-terminal signal peptide occupies residues 1 to 25; the sequence is MVSSFFMASTLLAISSCFNSSISRA. The helical transmembrane segment at 79-99 threads the bilayer; it reads IPVVIVVEISSTLVLLLSAFL.

It is found in the membrane. This is an uncharacterized protein from Saccharomyces cerevisiae (strain ATCC 204508 / S288c) (Baker's yeast).